Consider the following 141-residue polypeptide: Large ribosomal subunit protein uL11 (141 aa).

It belongs to the universal ribosomal protein uL11 family. In terms of assembly, part of the ribosomal stalk of the 50S ribosomal subunit. Interacts with L10 and the large rRNA to form the base of the stalk. L10 forms an elongated spine to which L12 dimers bind in a sequential fashion forming a multimeric L10(L12)X complex. Post-translationally, one or more lysine residues are methylated.

Its function is as follows. Forms part of the ribosomal stalk which helps the ribosome interact with GTP-bound translation factors. This Lactococcus lactis subsp. cremoris (strain MG1363) protein is Large ribosomal subunit protein uL11.